We begin with the raw amino-acid sequence, 655 residues long: p-hydroxybenzoic acid efflux pump subunit AaeB (655 aa).

Transmembrane regions (helical) follow at residues 13 to 33, 38 to 58, 69 to 89, 93 to 113, 121 to 141, 152 to 172, 370 to 390, 407 to 427, 431 to 451, 459 to 479, and 482 to 502; these read FAVK…HFQL, WAVL…GGEP, LRII…ISMI, LLMI…SSLV, WGLS…EPLL, EIVI…PRSI, LFWL…IAVV, FIYG…VIIP, QSML…GIEV, MGAL…TFHF, and FLDS…VILL.

It belongs to the aromatic acid exporter ArAE (TC 2.A.85) family.

It localises to the cell inner membrane. Forms an efflux pump with AaeA. Could function as a metabolic relief valve, allowing to eliminate certain compounds when they accumulate to high levels in the cell. This chain is p-hydroxybenzoic acid efflux pump subunit AaeB, found in Salmonella enteritidis PT4 (strain P125109).